The sequence spans 325 residues: Lipoyl synthase (325 aa).

A disordered region spans residues 1-31; it reads MASDSDLLDTKPAETRHPEKAHRPDQPTLRK. Basic and acidic residues predominate over residues 8-31; sequence LDTKPAETRHPEKAHRPDQPTLRK. Cys-61, Cys-66, Cys-72, Cys-87, Cys-91, Cys-94, and Ser-300 together coordinate [4Fe-4S] cluster. The region spanning 73 to 289 is the Radical SAM core domain; it reads WAKKHATFMI…AEIGRAKGFL (217 aa).

This sequence belongs to the radical SAM superfamily. Lipoyl synthase family. [4Fe-4S] cluster serves as cofactor.

The protein localises to the cytoplasm. It catalyses the reaction [[Fe-S] cluster scaffold protein carrying a second [4Fe-4S](2+) cluster] + N(6)-octanoyl-L-lysyl-[protein] + 2 oxidized [2Fe-2S]-[ferredoxin] + 2 S-adenosyl-L-methionine + 4 H(+) = [[Fe-S] cluster scaffold protein] + N(6)-[(R)-dihydrolipoyl]-L-lysyl-[protein] + 4 Fe(3+) + 2 hydrogen sulfide + 2 5'-deoxyadenosine + 2 L-methionine + 2 reduced [2Fe-2S]-[ferredoxin]. It functions in the pathway protein modification; protein lipoylation via endogenous pathway; protein N(6)-(lipoyl)lysine from octanoyl-[acyl-carrier-protein]: step 2/2. Its function is as follows. Catalyzes the radical-mediated insertion of two sulfur atoms into the C-6 and C-8 positions of the octanoyl moiety bound to the lipoyl domains of lipoate-dependent enzymes, thereby converting the octanoylated domains into lipoylated derivatives. The polypeptide is Lipoyl synthase (Methylocella silvestris (strain DSM 15510 / CIP 108128 / LMG 27833 / NCIMB 13906 / BL2)).